The primary structure comprises 401 residues: L-methionine gamma-lyase (401 aa).

Residues 59–61 (YTR) and 89–90 (GI) each bind pyridoxal 5'-phosphate. Tyr114 is a binding site for substrate. 210–212 (SAT) serves as a coordination point for pyridoxal 5'-phosphate. Lys213 is subject to N6-(pyridoxal phosphate)lysine. Arg377 is a binding site for substrate.

Belongs to the trans-sulfuration enzymes family. L-methionine gamma-lyase subfamily. In terms of assembly, homotetramer; dimer of active dimers. The cofactor is pyridoxal 5'-phosphate.

The enzyme catalyses L-methionine + H2O = methanethiol + 2-oxobutanoate + NH4(+). It carries out the reaction L-homocysteine + H2O = 2-oxobutanoate + hydrogen sulfide + NH4(+) + H(+). Its function is as follows. Catalyzes the alpha,gamma-elimination of L-methionine to produce methanethiol, 2-oxobutanoate and ammonia; methanethiol (methyl mercaptan) is considered to be one of the main causes of the oral malodor associated with periodontitis and may also play a role in the pathogenicity of T.denticola. Also displays homocysteine desulfhydrase activity, degrading homocysteine to produce hydrogen sulfide, 2-oxobutanoate and ammonia. The chain is L-methionine gamma-lyase from Treponema denticola (strain ATCC 35405 / DSM 14222 / CIP 103919 / JCM 8153 / KCTC 15104).